A 74-amino-acid chain; its full sequence is Cytochrome c oxidase subunit 6C (74 aa).

The Mitochondrial matrix segment spans residues 2–12 (STALAKPQMRG). The helical transmembrane segment at 13-53 (LLARRLRFHIVGAFMVSLGFATFYKFAVAEKRKKAYADFYR) threads the bilayer. Residues 54-74 (NYDSMKDFEEMRKAGIFQSAK) are Mitochondrial intermembrane-facing.

It belongs to the cytochrome c oxidase subunit 6c family. Component of the cytochrome c oxidase (complex IV, CIV), a multisubunit enzyme composed of 14 subunits. The complex is composed of a catalytic core of 3 subunits MT-CO1, MT-CO2 and MT-CO3, encoded in the mitochondrial DNA, and 11 supernumerary subunits COX4I1 (or COX4I2), COX5A, COX5B, COX6A2 (or COX6A1), COX6B1 (or COX6B2), COX6C, COX7A1 (or COX7A2), COX7B, COX7C, COX8B and NDUFA4, which are encoded in the nuclear genome. The complex exists as a monomer or a dimer and forms supercomplexes (SCs) in the inner mitochondrial membrane with NADH-ubiquinone oxidoreductase (complex I, CI) and ubiquinol-cytochrome c oxidoreductase (cytochrome b-c1 complex, complex III, CIII), resulting in different assemblies (supercomplex SCI(1)III(2)IV(1) and megacomplex MCI(2)III(2)IV(2)).

The protein localises to the mitochondrion inner membrane. Its pathway is energy metabolism; oxidative phosphorylation. Functionally, component of the cytochrome c oxidase, the last enzyme in the mitochondrial electron transport chain which drives oxidative phosphorylation. The respiratory chain contains 3 multisubunit complexes succinate dehydrogenase (complex II, CII), ubiquinol-cytochrome c oxidoreductase (cytochrome b-c1 complex, complex III, CIII) and cytochrome c oxidase (complex IV, CIV), that cooperate to transfer electrons derived from NADH and succinate to molecular oxygen, creating an electrochemical gradient over the inner membrane that drives transmembrane transport and the ATP synthase. Cytochrome c oxidase is the component of the respiratory chain that catalyzes the reduction of oxygen to water. Electrons originating from reduced cytochrome c in the intermembrane space (IMS) are transferred via the dinuclear copper A center (CU(A)) of subunit 2 and heme A of subunit 1 to the active site in subunit 1, a binuclear center (BNC) formed by heme A3 and copper B (CU(B)). The BNC reduces molecular oxygen to 2 water molecules using 4 electrons from cytochrome c in the IMS and 4 protons from the mitochondrial matrix. This chain is Cytochrome c oxidase subunit 6C (COX6C), found in Bos taurus (Bovine).